The sequence spans 314 residues: Aspartate carbamoyltransferase catalytic subunit (314 aa).

Carbamoyl phosphate contacts are provided by arginine 58 and threonine 59. Lysine 86 is an L-aspartate binding site. Residues arginine 108, histidine 136, and glutamine 139 each coordinate carbamoyl phosphate. The L-aspartate site is built by arginine 169 and arginine 223. 2 residues coordinate carbamoyl phosphate: glycine 264 and proline 265.

The protein belongs to the aspartate/ornithine carbamoyltransferase superfamily. ATCase family. Heterododecamer (2C3:3R2) of six catalytic PyrB chains organized as two trimers (C3), and six regulatory PyrI chains organized as three dimers (R2).

It catalyses the reaction carbamoyl phosphate + L-aspartate = N-carbamoyl-L-aspartate + phosphate + H(+). It participates in pyrimidine metabolism; UMP biosynthesis via de novo pathway; (S)-dihydroorotate from bicarbonate: step 2/3. Its function is as follows. Catalyzes the condensation of carbamoyl phosphate and aspartate to form carbamoyl aspartate and inorganic phosphate, the committed step in the de novo pyrimidine nucleotide biosynthesis pathway. In Roseobacter denitrificans (strain ATCC 33942 / OCh 114) (Erythrobacter sp. (strain OCh 114)), this protein is Aspartate carbamoyltransferase catalytic subunit.